Consider the following 508-residue polypeptide: Glycogen synthase (508 aa).

Lys-15 serves as a coordination point for ADP-alpha-D-glucose. Positions 483–508 are disordered; sequence ARNRAETRPQTASALSYREPRPAAEY.

The protein belongs to the glycosyltransferase 1 family. Bacterial/plant glycogen synthase subfamily.

It carries out the reaction [(1-&gt;4)-alpha-D-glucosyl](n) + ADP-alpha-D-glucose = [(1-&gt;4)-alpha-D-glucosyl](n+1) + ADP + H(+). It participates in glycan biosynthesis; glycogen biosynthesis. Synthesizes alpha-1,4-glucan chains using ADP-glucose. This chain is Glycogen synthase, found in Paracidovorax citrulli (strain AAC00-1) (Acidovorax citrulli).